The sequence spans 137 residues: Large ribosomal subunit protein uL16 (137 aa).

This sequence belongs to the universal ribosomal protein uL16 family. Part of the 50S ribosomal subunit.

In terms of biological role, binds 23S rRNA and is also seen to make contacts with the A and possibly P site tRNAs. This chain is Large ribosomal subunit protein uL16, found in Xanthomonas campestris pv. campestris (strain 8004).